The sequence spans 119 residues: Large ribosomal subunit protein bL20 (119 aa).

This sequence belongs to the bacterial ribosomal protein bL20 family.

Functionally, binds directly to 23S ribosomal RNA and is necessary for the in vitro assembly process of the 50S ribosomal subunit. It is not involved in the protein synthesizing functions of that subunit. The sequence is that of Large ribosomal subunit protein bL20 from Streptococcus pyogenes serotype M1.